We begin with the raw amino-acid sequence, 472 residues long: ATP synthase subunit beta (472 aa).

Residue 157–164 (GGAGVGKT) participates in ATP binding.

This sequence belongs to the ATPase alpha/beta chains family. In terms of assembly, F-type ATPases have 2 components, CF(1) - the catalytic core - and CF(0) - the membrane proton channel. CF(1) has five subunits: alpha(3), beta(3), gamma(1), delta(1), epsilon(1). CF(0) has three main subunits: a(1), b(2) and c(9-12). The alpha and beta chains form an alternating ring which encloses part of the gamma chain. CF(1) is attached to CF(0) by a central stalk formed by the gamma and epsilon chains, while a peripheral stalk is formed by the delta and b chains.

The protein resides in the cell membrane. The enzyme catalyses ATP + H2O + 4 H(+)(in) = ADP + phosphate + 5 H(+)(out). Produces ATP from ADP in the presence of a proton gradient across the membrane. The catalytic sites are hosted primarily by the beta subunits. The sequence is that of ATP synthase subunit beta from Desulforudis audaxviator (strain MP104C).